We begin with the raw amino-acid sequence, 132 residues long: Small ribosomal subunit protein uS8 (132 aa).

Belongs to the universal ribosomal protein uS8 family. As to quaternary structure, part of the 30S ribosomal subunit. Contacts proteins S5 and S12.

In terms of biological role, one of the primary rRNA binding proteins, it binds directly to 16S rRNA central domain where it helps coordinate assembly of the platform of the 30S subunit. The sequence is that of Small ribosomal subunit protein uS8 from Streptococcus uberis (strain ATCC BAA-854 / 0140J).